A 184-amino-acid polypeptide reads, in one-letter code: UPF0301 protein Rsph17029_2659 (184 aa).

The protein belongs to the UPF0301 (AlgH) family.

This is UPF0301 protein Rsph17029_2659 from Cereibacter sphaeroides (strain ATCC 17029 / ATH 2.4.9) (Rhodobacter sphaeroides).